The primary structure comprises 138 residues: Acidic phospholipase A2 homolog sistruxin A (138 aa).

The N-terminal stretch at 1–37 (MRALWIVAVLLLGVEGSLVEFETLIMKIAGRSGVWYY) is a signal peptide. Cystine bridges form between cysteine 42-cysteine 131, cysteine 44-cysteine 60, cysteine 59-cysteine 111, cysteine 65-cysteine 138, cysteine 66-cysteine 104, cysteine 73-cysteine 97, and cysteine 91-cysteine 102. Positions 78-83 (DVYTYR) are excised as a propeptide. At glutamine 84 the chain carries Pyrrolidone carboxylic acid. The propeptide occupies 119–124 (YNHKYW).

Belongs to the phospholipase A2 family. Group II subfamily. D49 sub-subfamily. Heterodimer of an acidic subunit and a basic chain. The acidic subunit is non-toxic, without enzymatic activity and comprises 3 peptides that are cross-linked by 7 disulfide bridges. The basic subunit is toxic, has phospholipase A2 activity and is composed of a single chain. As to expression, expressed by the venom gland.

It localises to the secreted. Functionally, snake venom phospholipase A2 (PLA2) that inhibits neuromuscular transmission by blocking acetylcholine release from the nerve termini. The protein is Acidic phospholipase A2 homolog sistruxin A of Sistrurus tergeminus (Western massasauga).